The chain runs to 222 residues: Probable GTP-binding protein EngB (222 aa).

The 175-residue stretch at 25–199 (AGVEVAFAGR…SQLLQNWFDT (175 aa)) folds into the EngB-type G domain. GTP is bound by residues 33 to 40 (GRSNAGKS), 60 to 64 (GRTQH), 78 to 81 (DLPG), 145 to 148 (TKAD), and 178 to 180 (FSS). Serine 40 and threonine 62 together coordinate Mg(2+).

This sequence belongs to the TRAFAC class TrmE-Era-EngA-EngB-Septin-like GTPase superfamily. EngB GTPase family. Mg(2+) serves as cofactor.

Its function is as follows. Necessary for normal cell division and for the maintenance of normal septation. This chain is Probable GTP-binding protein EngB, found in Nitrosomonas europaea (strain ATCC 19718 / CIP 103999 / KCTC 2705 / NBRC 14298).